The primary structure comprises 159 residues: Putative ribosomal RNA large subunit methyltransferase H (159 aa).

S-adenosyl-L-methionine is bound by residues Leu-76, Gly-108, and 127 to 132; that span reads FSKMTF.

This sequence belongs to the RNA methyltransferase RlmH family.

Its subcellular location is the cytoplasm. The catalysed reaction is pseudouridine(1915) in 23S rRNA + S-adenosyl-L-methionine = N(3)-methylpseudouridine(1915) in 23S rRNA + S-adenosyl-L-homocysteine + H(+). Specifically methylates the pseudouridine at position 1915 (m3Psi1915) in 23S rRNA. This is Putative ribosomal RNA large subunit methyltransferase H from Methanococcus vannielii (strain ATCC 35089 / DSM 1224 / JCM 13029 / OCM 148 / SB).